The primary structure comprises 341 residues: Inositol monophosphatase 3 (341 aa).

A helical membrane pass occupies residues 11–31; it reads LGIAVFCLLGVGVIYHLYAGV. Mg(2+)-binding residues include E117, D157, L159, D160, and D283. A substrate-binding site is contributed by E117. Residues 159–162 and D283 contribute to the substrate site; that span reads LDAT.

Belongs to the inositol monophosphatase superfamily. Requires Mg(2+) as cofactor.

The protein localises to the membrane. The enzyme catalyses a myo-inositol phosphate + H2O = myo-inositol + phosphate. It participates in polyol metabolism; myo-inositol biosynthesis; myo-inositol from D-glucose 6-phosphate: step 2/2. The polypeptide is Inositol monophosphatase 3 (bpnt2) (Danio rerio (Zebrafish)).